A 258-amino-acid polypeptide reads, in one-letter code: Ubiquinone/menaquinone biosynthesis C-methyltransferase UbiE (258 aa).

S-adenosyl-L-methionine is bound by residues Thr-83, Asp-104, and 130-131 (DA).

The protein belongs to the class I-like SAM-binding methyltransferase superfamily. MenG/UbiE family.

The enzyme catalyses a 2-demethylmenaquinol + S-adenosyl-L-methionine = a menaquinol + S-adenosyl-L-homocysteine + H(+). It catalyses the reaction a 2-methoxy-6-(all-trans-polyprenyl)benzene-1,4-diol + S-adenosyl-L-methionine = a 5-methoxy-2-methyl-3-(all-trans-polyprenyl)benzene-1,4-diol + S-adenosyl-L-homocysteine + H(+). Its pathway is quinol/quinone metabolism; menaquinone biosynthesis; menaquinol from 1,4-dihydroxy-2-naphthoate: step 2/2. It functions in the pathway cofactor biosynthesis; ubiquinone biosynthesis. Functionally, methyltransferase required for the conversion of demethylmenaquinol (DMKH2) to menaquinol (MKH2) and the conversion of 2-polyprenyl-6-methoxy-1,4-benzoquinol (DDMQH2) to 2-polyprenyl-3-methyl-6-methoxy-1,4-benzoquinol (DMQH2). The protein is Ubiquinone/menaquinone biosynthesis C-methyltransferase UbiE of Bordetella bronchiseptica (strain ATCC BAA-588 / NCTC 13252 / RB50) (Alcaligenes bronchisepticus).